The chain runs to 24 residues: Humanin-like 9 (24 aa).

This sequence belongs to the humanin family. As to expression, highly expressed in the kidney, heart muscle and testis.

The protein resides in the secreted. It localises to the cytoplasm. Plays a role as a neuroprotective and antiapoptotic factor. The sequence is that of Humanin-like 9 from Homo sapiens (Human).